The following is a 764-amino-acid chain: E3 ubiquitin-protein ligase CBL-B-B (764 aa).

The span at 1–19 (MASSSSSSSNSSTSSSALS) shows a compositional bias: low complexity. A disordered region spans residues 1-27 (MASSSSSSSNSSTSSSALSGRLPGARS). Positions 48–180 (PPKQAAADRR…KAIFPSGQFQ (133 aa)) are 4H. The Cbl-PTB domain occupies 48–356 (PPKQAAADRR…GRSYNPDLTD (309 aa)). The EF-hand-like stretch occupies residues 181-253 (GDTFRITKAD…FEFDIFARLF (73 aa)). Asp-234, Thr-236, Asn-238, Tyr-240, and Glu-245 together coordinate Ca(2+). The tract at residues 254-356 (QPWSSILRNW…GRSYNPDLTD (103 aa)) is SH2-like. 4-O-phospho-L-tyrosine is bound at residue Arg-299. Residues 357-385 (LCEPTPHDHIKVTQEQYELYCEMGSTFQL) form a linker region. An RING-type zinc finger spans residues 386-425 (CKICAENDKDVKIEPCGHLMCTSCLTSWQESDGQGCPFCR). Disordered stretches follow at residues 482-583 (MNER…SRTC) and 707-726 (KVRNSAEEDDSEYKIPSSHP). Positions 485–498 (RQNSPVTSPGSSPL) are enriched in polar residues. Over residues 556-578 (LPAPPPPLREPPPPPERPPPIPP) the composition is skewed to pro residues.

Interacts with several SH3 domain-containing proteins and with poly-ubiquitinated proteins.

The protein localises to the cytoplasm. The enzyme catalyses S-ubiquitinyl-[E2 ubiquitin-conjugating enzyme]-L-cysteine + [acceptor protein]-L-lysine = [E2 ubiquitin-conjugating enzyme]-L-cysteine + N(6)-ubiquitinyl-[acceptor protein]-L-lysine.. The protein operates within protein modification; protein ubiquitination. Functionally, E3 ubiquitin-protein ligase which accepts ubiquitin from specific E2 ubiquitin-conjugating enzymes, and transfers it to substrates, generally promoting their degradation by the proteasome. This chain is E3 ubiquitin-protein ligase CBL-B-B (cblb-b), found in Xenopus laevis (African clawed frog).